A 308-amino-acid polypeptide reads, in one-letter code: Cilia- and flagella-associated protein 73 (308 aa).

2 coiled-coil regions span residues 103-134 and 164-227; these read RIQKEKEIEQLTEVLEELKSEKERILEVLEKN and LSAT…QEAK.

It belongs to the CFAP73 family. Interacts with FAP100; form the modifier of inner arm (MIA) complex.

It is found in the cytoplasm. The protein localises to the cytoskeleton. It localises to the flagellum axoneme. Functionally, as part of MIA, a complex associated with the outer doublet microtubules of the axoneme, may play a role in ciliary/flagellar motility by regulating the assembly and the activity of inner dynein arm. The chain is Cilia- and flagella-associated protein 73 from Chlamydomonas reinhardtii (Chlamydomonas smithii).